The primary structure comprises 159 residues: Protein-export protein SecB (159 aa).

The protein belongs to the SecB family. Homotetramer, a dimer of dimers. One homotetramer interacts with 1 SecA dimer.

Its subcellular location is the cytoplasm. One of the proteins required for the normal export of preproteins out of the cell cytoplasm. It is a molecular chaperone that binds to a subset of precursor proteins, maintaining them in a translocation-competent state. It also specifically binds to its receptor SecA. The chain is Protein-export protein SecB from Bartonella bacilliformis (strain ATCC 35685 / KC583 / Herrer 020/F12,63).